The chain runs to 214 residues: 3-isopropylmalate dehydratase small subunit (214 aa).

This sequence belongs to the LeuD family. LeuD type 1 subfamily. In terms of assembly, heterodimer of LeuC and LeuD.

The enzyme catalyses (2R,3S)-3-isopropylmalate = (2S)-2-isopropylmalate. It participates in amino-acid biosynthesis; L-leucine biosynthesis; L-leucine from 3-methyl-2-oxobutanoate: step 2/4. Catalyzes the isomerization between 2-isopropylmalate and 3-isopropylmalate, via the formation of 2-isopropylmaleate. This is 3-isopropylmalate dehydratase small subunit from Methylobacillus flagellatus (strain ATCC 51484 / DSM 6875 / VKM B-1610 / KT).